The following is a 150-amino-acid chain: Deoxyuridine 5'-triphosphate nucleotidohydrolase (150 aa).

Substrate-binding positions include 69–71 (RSG), Asn82, 86–88 (LID), and Met96.

This sequence belongs to the dUTPase family. The cofactor is Mg(2+).

The catalysed reaction is dUTP + H2O = dUMP + diphosphate + H(+). It participates in pyrimidine metabolism; dUMP biosynthesis; dUMP from dCTP (dUTP route): step 2/2. In terms of biological role, this enzyme is involved in nucleotide metabolism: it produces dUMP, the immediate precursor of thymidine nucleotides and it decreases the intracellular concentration of dUTP so that uracil cannot be incorporated into DNA. This is Deoxyuridine 5'-triphosphate nucleotidohydrolase from Acinetobacter baumannii (strain AB307-0294).